The following is a 476-amino-acid chain: Protein transport protein Sec61 subunit alpha isoform 1 (476 aa).

Topologically, residues 2–28 are cytoplasmic; that stretch reads AIKFLEVIKPFCVILPEIQKPERKIQF. A helical transmembrane segment spans residues 29-46; that stretch reads KEKVLWTAITLFIFLVCC. Topologically, residues 47–80 are lumenal; that stretch reads QIPLFGIMSSDSADPFYWMRVILASNRGTLMELG. Residues 81–97 traverse the membrane as a helical segment; that stretch reads ISPIVTSGLIMQLLAGA. The Cytoplasmic portion of the chain corresponds to 98 to 109; it reads KIIEVGDTPKDR. Residues 110–131 traverse the membrane as a helical segment; it reads ALFNGAQKLFGMIITIGQSIVY. At 132–148 the chain is on the lumenal side; that stretch reads VMTGMYGDPSEMGAGIC. Residues 149–167 traverse the membrane as a helical segment; that stretch reads LLITIQLFVAGLIVLLLDE. The Cytoplasmic segment spans residues 168–177; that stretch reads LLQKGYGLGS. A helical transmembrane segment spans residues 178-196; that stretch reads GISLFIATNICETIVWKAF. The Lumenal portion of the chain corresponds to 197–241; that stretch reads SPTTVNTGRGMEFEGAIIALFHLLATRTDKVRALREAFYRQNLPN. Residues 242-259 form a helical membrane-spanning segment; it reads LMNLIATIFVFAVVIYFQ. Topologically, residues 260–285 are cytoplasmic; that stretch reads GFRVDLPIKSARYRGQYNTYPIKLFY. Residues 286–306 form a helical membrane-spanning segment; the sequence is TSNIPIILQSALVSNLYVISQ. The Lumenal segment spans residues 307–356; it reads MLSARFSGNLLVSLLGTWSDTSSGGPARAYPVGGLCHYLSPPESFGSVLE. A helical transmembrane segment spans residues 357 to 379; sequence DPVHAVVYIVFMLGSCAFFSKTW. Topologically, residues 380–420 are cytoplasmic; that stretch reads IEVSGSSAKDVAKQLKEQQMVMRGHRETSMVHELNRYIPTA. The chain crosses the membrane as a helical span at residues 421-437; the sequence is AAFGGLCIGALSVLADF. Residues 438–443 are Lumenal-facing; that stretch reads LGAIGS. A helical membrane pass occupies residues 444 to 458; that stretch reads GTGILLAVTIIYQYF. Residues 459-476 are Cytoplasmic-facing; the sequence is EIFVKEQSEVGSMGALLF.

This sequence belongs to the SecY/SEC61-alpha family. The SEC61 channel-forming translocon complex consists of channel-forming core components SEC61A1, SEC61B and SEC61G and different auxiliary components such as SEC62 and SEC63. The SEC61 channel associates with the multi-pass translocon (MPT) complex.

It localises to the endoplasmic reticulum membrane. In terms of biological role, component of SEC61 channel-forming translocon complex that mediates transport of signal peptide-containing precursor polypeptides across the endoplasmic reticulum (ER). Forms a ribosome receptor and a gated pore in the ER membrane, both functions required for cotranslational translocation of nascent polypeptides. May cooperate with auxiliary protein SEC62, SEC63 and HSPA5/BiP to enable post-translational transport of small presecretory proteins. The SEC61 channel is also involved in ER membrane insertion of transmembrane proteins: it mediates membrane insertion of the first few transmembrane segments of proteins, while insertion of subsequent transmembrane regions of multi-pass membrane proteins is mediated by the multi-pass translocon (MPT) complex. The SEC61 channel cooperates with the translocating protein TRAM1 to import nascent proteins into the ER. Controls the passive efflux of calcium ions from the ER lumen to the cytosol through SEC61 channel, contributing to the maintenance of cellular calcium homeostasis. Plays a critical role in nephrogenesis, specifically at pronephros stage. The polypeptide is Protein transport protein Sec61 subunit alpha isoform 1 (SEC61A1) (Canis lupus familiaris (Dog)).